We begin with the raw amino-acid sequence, 357 residues long: Membrane-bound lytic murein transglycosylase C (357 aa).

The signal sequence occupies residues 1–17 (MKLKKFLVLLLIPFLYA). Cysteine 18 carries N-palmitoyl cysteine lipidation. Cysteine 18 is lipidated: S-diacylglycerol cysteine.

Belongs to the transglycosylase Slt family.

The protein resides in the cell outer membrane. It catalyses the reaction Exolytic cleavage of the (1-&gt;4)-beta-glycosidic linkage between N-acetylmuramic acid (MurNAc) and N-acetylglucosamine (GlcNAc) residues in peptidoglycan, from either the reducing or the non-reducing ends of the peptidoglycan chains, with concomitant formation of a 1,6-anhydrobond in the MurNAc residue.. Its function is as follows. Murein-degrading enzyme. May play a role in recycling of muropeptides during cell elongation and/or cell division. This chain is Membrane-bound lytic murein transglycosylase C, found in Mannheimia succiniciproducens (strain KCTC 0769BP / MBEL55E).